A 662-amino-acid chain; its full sequence is Interleukin-12 receptor subunit beta-1 (662 aa).

The first 23 residues, 1–23 (MEPLVTWVVPLLFLFLLSRQGAA), serve as a signal peptide directing secretion. The Extracellular segment spans residues 24 to 545 (CRTSECCFQD…RFSIEVQVSD (522 aa)). Fibronectin type-III domains follow at residues 46-136 (GPRD…LYNS), 142-234 (PLGD…VPPE), 237-337 (PQPQ…IPAD), 338-444 (THTE…GNAS), and 448-542 (TPHH…IEVQ). A disulfide bond links Cys52 and Cys62. Residue Asn121 is glycosylated (N-linked (GlcNAc...) asparagine). The short motif at 222–226 (WSKWS) is the WSXWS motif element. 5 N-linked (GlcNAc...) asparagine glycosylation sites follow: Asn329, Asn346, Asn352, Asn442, and Asn456. Residues 546-570 (WLIFFASLGSFLSILLVGVLGYLGL) form a helical membrane-spanning segment. At 571–662 (NRAARHLCPP…EDGDRCKAKM (92 aa)) the chain is on the cytoplasmic side. The Box 1 motif motif lies at 577–585 (LCPPLPTPC). A compositionally biased stretch (basic and acidic residues) spans 626–637 (GERTEPLEKTEL). Residues 626–648 (GERTEPLEKTELPEGAPELALDT) form a disordered region.

It belongs to the type I cytokine receptor family. Type 2 subfamily. Dimer or oligomer; disulfide-linked. Interacts with IL12RB2 to form the high affinity IL12 receptor. Heterodimer with IL23R; in presence of IL23. The heterodimer forms the IL23 receptor.

Its subcellular location is the membrane. In terms of biological role, functions as an interleukin receptor which binds interleukin-12 with low affinity and is involved in IL12 transduction. Associated with IL12RB2 it forms a functional, high affinity receptor for IL12. Also associates with IL23R to form the interleukin-23 receptor which functions in IL23 signal transduction probably through activation of the Jak-Stat signaling cascade. This Homo sapiens (Human) protein is Interleukin-12 receptor subunit beta-1 (IL12RB1).